The chain runs to 353 residues: Probable WRKY transcription factor 7 (353 aa).

Residues 117–259 are disordered; it reads VEEKKPETSS…SSRCHCSKKR (143 aa). Low complexity predominate over residues 158 to 176; sequence SHNNNNNQNQTKNGSSSSS. Polar residues-rich tracts occupy residues 184 to 204 and 213 to 229; these read APST…SFMS and THMS…QLSG. The segment at residues 275–341 is a DNA-binding region (WRKY); the sequence is KMADIPSDEF…YEGDHNHALV (67 aa).

It belongs to the WRKY group II-d family. In young, mature and senescent leaves.

It is found in the nucleus. Its function is as follows. Transcription factor. Interacts specifically with the W box (5'-(T)TGAC[CT]-3'), a frequently occurring elicitor-responsive cis-acting element. The protein is Probable WRKY transcription factor 7 (WRKY7) of Arabidopsis thaliana (Mouse-ear cress).